The following is a 322-amino-acid chain: Probable ethanolamine-phosphate cytidylyltransferase (322 aa).

The protein belongs to the cytidylyltransferase family.

It catalyses the reaction phosphoethanolamine + CTP + H(+) = CDP-ethanolamine + diphosphate. It functions in the pathway phospholipid metabolism; phosphatidylethanolamine biosynthesis; phosphatidylethanolamine from ethanolamine: step 2/3. The protein is Probable ethanolamine-phosphate cytidylyltransferase (MUQ1) of Encephalitozoon cuniculi (strain GB-M1) (Microsporidian parasite).